Reading from the N-terminus, the 1020-residue chain is C protein alpha-antigen (1020 aa).

Positions 1–41 (MFRRSKNNSYDTSQTKQRFSIKKFKFGAASVLIGLSFLGGV) are cleaved as a signal peptide. The interval 227 to 964 (VPDKDKYDPT…EVTVHVTPKP (738 aa)) is 9 X 82 AA tandem repeats. Disordered regions lie at residues 261-281 (DGSKGVPTVVGDRPDTNVPGD), 306-330 (PKPVPDKDKYDPTGGETTVPQGTPV), 342-363 (PDGSKGVPTVVGDRPDTNVPGD), 388-445 (PKPV…VPGD), 470-494 (PKPVPDKDKYDPTGGETTVPQGTPV), 506-527 (PDGSKGVPTVVGDRPDTNVPGD), 552-576 (PKPVPDKDKYDPTGGETTVPQGTPV), 588-610 (PDGSKGVPTVVGDRPDTNVPGDH), 634-658 (PKPVPDKDKYDPTGGETTVPQGTPV), 670-692 (PDGSKGVPTVVGDRPDTNVPGDH), 716-740 (PKPVPDKDKYDPTGGETTVPQGTPV), 752-774 (PDGSKGVPTVVGDRPDTNVPGDH), 798-822 (PKPVPDKDKYDPTGGETTVPQGTPV), 834-856 (PDGSKGVPTVVGDRPDTNVPGDH), 880-904 (PKPVPDKDKYDPTGGETTVPQGTPV), and 962-989 (PKPVPDKDKYDPTGKAQQVNGKGNKLPA). The span at 272–281 (DRPDTNVPGD) shows a compositional bias: basic and acidic residues. The segment covering 320–329 (GETTVPQGTP) has biased composition (polar residues). The segment covering 354–363 (DRPDTNVPGD) has biased composition (basic and acidic residues). The span at 402 to 411 (GETTVPQGTP) shows a compositional bias: polar residues. The segment covering 436–445 (DRPDTNVPGD) has biased composition (basic and acidic residues). A compositionally biased stretch (polar residues) spans 484–493 (GETTVPQGTP). The span at 518 to 527 (DRPDTNVPGD) shows a compositional bias: basic and acidic residues. Residues 566–575 (GETTVPQGTP) are compositionally biased toward polar residues. The segment covering 600–610 (DRPDTNVPGDH) has biased composition (basic and acidic residues). Polar residues predominate over residues 648–657 (GETTVPQGTP). A compositionally biased stretch (basic and acidic residues) spans 682–692 (DRPDTNVPGDH). Residues 730 to 739 (GETTVPQGTP) are compositionally biased toward polar residues. Residues 764 to 774 (DRPDTNVPGDH) are compositionally biased toward basic and acidic residues. Residues 812–821 (GETTVPQGTP) show a composition bias toward polar residues. Basic and acidic residues predominate over residues 846–856 (DRPDTNVPGDH). A compositionally biased stretch (polar residues) spans 894–903 (GETTVPQGTP). The LPXTG sorting signal signature appears at 987-991 (LPATG). Thr-990 carries the post-translational modification Pentaglycyl murein peptidoglycan amidated threonine. The propeptide at 991-1020 (GENATPFFNVAALTIISSVGLLSVSKKKED) is removed by sortase.

The protein localises to the secreted. It is found in the cell wall. Functionally, may play a role in both virulence and immunity. This is C protein alpha-antigen (bca) from Streptococcus agalactiae serotype Ia (strain ATCC 27591 / A909 / CDC SS700).